Consider the following 146-residue polypeptide: Hemoglobin subunit beta (146 aa).

The residue at position 1 (Val1) is an N-acetylvaline. The region spanning Gln2–His146 is the Globin domain. Ser44 carries the phosphoserine modification. Lys59 carries the N6-acetyllysine modification. His63 provides a ligand contact to heme b. At Lys82 the chain carries N6-acetyllysine. Residue His92 coordinates heme b. Cys93 is subject to S-nitrosocysteine. The residue at position 144 (Lys144) is an N6-acetyllysine.

Belongs to the globin family. In terms of assembly, heterotetramer of two alpha chains and two beta chains. Red blood cells.

In terms of biological role, involved in oxygen transport from the lung to the various peripheral tissues. In Equus caballus (Horse), this protein is Hemoglobin subunit beta (HBB).